Consider the following 507-residue polypeptide: ATP synthase subunit alpha, chloroplastic (507 aa).

Residue 170-177 participates in ATP binding; that stretch reads GDRQTGKT.

Belongs to the ATPase alpha/beta chains family. In terms of assembly, F-type ATPases have 2 components, CF(1) - the catalytic core - and CF(0) - the membrane proton channel. CF(1) has five subunits: alpha(3), beta(3), gamma(1), delta(1), epsilon(1). CF(0) has four main subunits: a, b, b' and c.

The protein localises to the plastid. The protein resides in the chloroplast thylakoid membrane. It catalyses the reaction ATP + H2O + 4 H(+)(in) = ADP + phosphate + 5 H(+)(out). Produces ATP from ADP in the presence of a proton gradient across the membrane. The alpha chain is a regulatory subunit. This chain is ATP synthase subunit alpha, chloroplastic, found in Physcomitrium patens (Spreading-leaved earth moss).